The sequence spans 870 residues: NEDD4-like E3 ubiquitin-protein ligase WWP2 (870 aa).

Positions M1 to M117 constitute a C2 domain. The interval V151–P299 is disordered. Composition is skewed to polar residues over residues P152–T171 and S200–Q210. Position 211 is a phosphoserine (S211). Polar residues-rich tracts occupy residues V222–T243 and V263–L272. Low complexity predominate over residues Q290 to P299. 4 consecutive WW domains span residues D300–P333, R330–A363, G405–T437, and P444–P477. Residues K536–E870 enclose the HECT domain. C838 serves as the catalytic Glycyl thioester intermediate.

Interacts with POU5F1, RBP1, EGR2 and SLC11A2. Interacts with SCNN1A, SCNN1B, SCNN1G, WBP1, WBP2 and ATN1. Interacts with ERBB4, NDFIP1 and NDFIP2. Interacts with ARRDC4. Interacts (via WW domains) with ARRDC1 (via PPxY motifs); ubiquitinates ARRDC1. Interacts (via WW domains) with ARRDC2 and ARRDC3. In terms of assembly, (Microbial infection) Interacts with adenovirus type 2 PIII. In terms of processing, autoubiquitinated. Ubiquitinated by the SCF(FBXL15) complex, leading to its degradation by the proteasome. As to expression, detected in heart, throughout the brain, placenta, lung, liver, muscle, kidney and pancreas. Also detected in spleen and peripheral blood leukocytes.

It is found in the nucleus. The enzyme catalyses S-ubiquitinyl-[E2 ubiquitin-conjugating enzyme]-L-cysteine + [acceptor protein]-L-lysine = [E2 ubiquitin-conjugating enzyme]-L-cysteine + N(6)-ubiquitinyl-[acceptor protein]-L-lysine.. It participates in protein modification; protein ubiquitination. Its activity is regulated as follows. Activated by NDFIP1- and NDFIP2-binding. Its function is as follows. E3 ubiquitin-protein ligase which accepts ubiquitin from an E2 ubiquitin-conjugating enzyme in the form of a thioester and then directly transfers the ubiquitin to targeted substrates. Polyubiquitinates POU5F1 by 'Lys-63'-linked conjugation and promotes it to proteasomal degradation; in embryonic stem cells (ESCs) the ubiquitination is proposed to regulate POU5F1 protein level. Ubiquitinates EGR2 and promotes it to proteasomal degradation; in T-cells the ubiquitination inhibits activation-induced cell death. Ubiquitinates SLC11A2; the ubiquitination is enhanced by presence of NDFIP1 and NDFIP2. Ubiquitinates RPB1 and promotes it to proteasomal degradation. In Homo sapiens (Human), this protein is NEDD4-like E3 ubiquitin-protein ligase WWP2 (WWP2).